Consider the following 195-residue polypeptide: Putative L(+)-tartrate dehydratase subunit beta (195 aa).

Residue histidine 36 is part of the active site. Lysine 104 is a substrate binding site.

Belongs to the class-I fumarase family. In terms of assembly, heterotetramer of two alpha and two beta subunits.

It catalyses the reaction (2R,3R)-tartrate = oxaloacetate + H2O. The chain is Putative L(+)-tartrate dehydratase subunit beta from Methanocaldococcus jannaschii (strain ATCC 43067 / DSM 2661 / JAL-1 / JCM 10045 / NBRC 100440) (Methanococcus jannaschii).